Consider the following 462-residue polypeptide: GTPase HflX (462 aa).

One can recognise a Hflx-type G domain in the interval 255 to 452 (PAVGIVGYTN…LLEEKIYNLP (198 aa)). GTP-binding positions include 261 to 268 (GYTNAGKS), 286 to 290 (FATLD), 308 to 311 (DTVG), 374 to 377 (NKID), and 430 to 432 (SAY). Serine 268 and threonine 288 together coordinate Mg(2+).

It belongs to the TRAFAC class OBG-HflX-like GTPase superfamily. HflX GTPase family. In terms of assembly, monomer. Associates with the 50S ribosomal subunit. Requires Mg(2+) as cofactor.

Its subcellular location is the cytoplasm. Functionally, GTPase that associates with the 50S ribosomal subunit and may have a role during protein synthesis or ribosome biogenesis. In Leptospira borgpetersenii serovar Hardjo-bovis (strain JB197), this protein is GTPase HflX.